We begin with the raw amino-acid sequence, 196 residues long: MLNYELELWEKGLLVAGVDEAGRGPLAGPVVAAAVILPPFTEPFIKGDSKKLTKKEREEAYEEIKNKALAVGTAVVDSAVIDRVNILRATKLAMKRALKDLKYHYDIVITDYVKLEGENCMPLVKGDEKSLNCACASIIAKVIRDKIMEIYHKIYPDFNFASNKGYPSKTHLEKVEKGEYTEIHRKSFSPLKKKLF.

Residues 13–196 form the RNase H type-2 domain; sequence LLVAGVDEAG…SFSPLKKKLF (184 aa). Residues Asp-19, Glu-20, and Asp-111 each coordinate a divalent metal cation.

It belongs to the RNase HII family. The cofactor is Mn(2+). Mg(2+) serves as cofactor.

The protein localises to the cytoplasm. The enzyme catalyses Endonucleolytic cleavage to 5'-phosphomonoester.. Endonuclease that specifically degrades the RNA of RNA-DNA hybrids. In Aquifex aeolicus (strain VF5), this protein is Ribonuclease HII (rnhB).